Reading from the N-terminus, the 482-residue chain is UDP-N-acetylmuramate--L-alanine ligase (482 aa).

Position 123–129 (123–129 (GTHGKTT)) interacts with ATP.

Belongs to the MurCDEF family.

The protein resides in the cytoplasm. The catalysed reaction is UDP-N-acetyl-alpha-D-muramate + L-alanine + ATP = UDP-N-acetyl-alpha-D-muramoyl-L-alanine + ADP + phosphate + H(+). The protein operates within cell wall biogenesis; peptidoglycan biosynthesis. Its function is as follows. Cell wall formation. The polypeptide is UDP-N-acetylmuramate--L-alanine ligase (Pseudomonas putida (strain ATCC 700007 / DSM 6899 / JCM 31910 / BCRC 17059 / LMG 24140 / F1)).